The primary structure comprises 425 residues: Glutamyl-tRNA reductase (425 aa).

Substrate contacts are provided by residues 49 to 52 (TCNR), Ser107, 112 to 114 (EPQ), and Gln118. The active-site Nucleophile is Cys50. 187-192 (GAGETI) contributes to the NADP(+) binding site.

Belongs to the glutamyl-tRNA reductase family. In terms of assembly, homodimer.

The enzyme catalyses (S)-4-amino-5-oxopentanoate + tRNA(Glu) + NADP(+) = L-glutamyl-tRNA(Glu) + NADPH + H(+). It participates in porphyrin-containing compound metabolism; protoporphyrin-IX biosynthesis; 5-aminolevulinate from L-glutamyl-tRNA(Glu): step 1/2. In terms of biological role, catalyzes the NADPH-dependent reduction of glutamyl-tRNA(Glu) to glutamate 1-semialdehyde (GSA). This chain is Glutamyl-tRNA reductase, found in Pseudomonas putida (strain ATCC 47054 / DSM 6125 / CFBP 8728 / NCIMB 11950 / KT2440).